The following is a 282-amino-acid chain: Putative 4-diphosphocytidyl-2-C-methyl-D-erythritol kinase (282 aa).

Lysine 10 is an active-site residue. ATP is bound at residue 94-104 (PICAGLGGGSS). Aspartate 136 is an active-site residue.

Belongs to the GHMP kinase family. IspE subfamily.

It catalyses the reaction 4-CDP-2-C-methyl-D-erythritol + ATP = 4-CDP-2-C-methyl-D-erythritol 2-phosphate + ADP + H(+). Its function is as follows. Catalyzes the phosphorylation of the position 2 hydroxy group of 4-diphosphocytidyl-2C-methyl-D-erythritol. This is Putative 4-diphosphocytidyl-2-C-methyl-D-erythritol kinase (ipk) from Streptococcus mutans serotype c (strain ATCC 700610 / UA159).